Consider the following 575-residue polypeptide: MNGPALQPSSPSSAPSASPAAAPRGWSEFCELHAVAAARELARQYWLFAREHPQHAPLRAELVSLQFTDLFQRYFCREVRDGRAPGRDYRDTGRGPPAKAEASPEPGPGPAAPGLPKARSSEELAPPRPPGPCSFQHFRRSLRHIFRRRSAGELPAAHTAAAPGTPGEAAETPARPGLAKKFLPWSLAREPPPEALKEAVLRYSLADEASMDSGARWQRGRLALRRAPGPDGPDRVLELFDPPKSSRPKLQAACSSIQEVRWCTRLEMPDNLYTFVLKVKDRTDIIFEVGDEQQLNSWMAELSECTGRGLESTEAEMHIPSALEPSTSSSPRGSTDSLNQGASPGGLLDPACQKTDHFLSCYPWFHGPISRVKAAQLVQLQGPDAHGVFLVRQSETRRGEYVLTFNFQGIAKHLRLSLTERGQCRVQHLHFPSVVDMLHHFQRSPIPLECGAACDVRLSSYVVVVSQPPGSCNTVLFPFSLPHWDSESLPHWGSELGLPHLSSSGCPRGLSPEGLPGRSSPPEQIFHLVPSPEELANSLQHLEHEPVNRARDSDYEMDSSSRSHLRAIDNQYTPL.

3 disordered regions span residues 1-23 (MNGP…AAAP), 83-136 (RAPG…CSFQ), and 150-176 (SAGE…PARP). Phosphoserine is present on serine 13. Positions 83 to 93 (RAPGRDYRDTG) are enriched in basic and acidic residues. Residues 95–104 (GPPAKAEASP) show a composition bias toward low complexity. Phosphoserine is present on residues serine 103, serine 120, and serine 150. The span at 152–174 (GELPAAHTAAAPGTPGEAAETPA) shows a compositional bias: low complexity. Residues 194–307 (EALKEAVLRY…WMAELSECTG (114 aa)) enclose the PH domain. Residues 322 to 346 (ALEPSTSSSPRGSTDSLNQGASPGG) are disordered. Residues 325-337 (PSTSSSPRGSTDS) show a composition bias toward low complexity. Serine 330 carries the post-translational modification Phosphoserine. Positions 364-462 (WFHGPISRVK…ACDVRLSSYV (99 aa)) constitute an SH2 domain. Disordered regions lie at residues 503 to 525 (SSGC…PEQI) and 546 to 575 (PVNR…YTPL).

Belongs to the SH2B adapter family. In terms of assembly, binds to the tyrosine-phosphorylated TCR zeta chain via its SH2 domain. Tyrosine phosphorylated by LCK. As to expression, preferentially expressed by lymphoid cell lines.

Functionally, links T-cell receptor activation signal to phospholipase C-gamma-1, GRB2 and phosphatidylinositol 3-kinase. The protein is SH2B adapter protein 3 (SH2B3) of Homo sapiens (Human).